Consider the following 103-residue polypeptide: MSRVCDITGASKSFGNKVSHSNRKTKRSYLVNLHNVTLVSEVLGRKFRVKVASRTLRTIDYKGGLDLYLLNTSSRKLTEVARKIKRKIKVAIATGKSKQSDNI.

It belongs to the bacterial ribosomal protein bL28 family.

The sequence is that of Large ribosomal subunit protein bL28 from Anaplasma phagocytophilum (strain HZ).